The sequence spans 1012 residues: Multiple C2 domain and transmembrane region protein 10 (1012 aa).

The 115-residue stretch at 1–115 (MTEAKTGTGN…REGESVVQLY (115 aa)) folds into the C2 1 domain. A disordered region spans residues 141–203 (ENGENVRRVN…SQQNGQGQRM (63 aa)). The span at 148–160 (RVNRSGGSKKSKK) shows a compositional bias: basic residues. 2 stretches are compositionally biased toward low complexity: residues 161–180 (VQNVSSSMAIQQQQQQQQQQ) and 188–202 (RGNQQQSQQNGQGQR). C2 domains lie at 262 to 376 (SSHK…PQWY), 411 to 551 (KAGN…SRWF), and 585 to 710 (YNSD…THSY). Ca(2+) contacts are provided by E296, E344, N346, and E349. 3 helical membrane passes run 810–830 (FFRLVNVISGLVAVAKLVEVM), 841–861 (VFVLAFLFMVLFPELLLPCLL), and 952–972 (ATFLFLMFCLLAAVGFYTVPV).

This sequence belongs to the MCTP family. Ca(2+) serves as cofactor. In terms of tissue distribution, highly expressed in roots meristems, shoot apical meristems (SAMs) and in incipient leaf primordia. Observed in flowers.

It is found in the endoplasmic reticulum membrane. In terms of biological role, may function as a signaling molecule by regulating the trafficking of other regulators. This Arabidopsis thaliana (Mouse-ear cress) protein is Multiple C2 domain and transmembrane region protein 10.